The primary structure comprises 142 residues: Protein-export protein SecB (142 aa).

Belongs to the SecB family. In terms of assembly, homotetramer, a dimer of dimers. One homotetramer interacts with 1 SecA dimer.

The protein localises to the cytoplasm. Its function is as follows. One of the proteins required for the normal export of preproteins out of the cell cytoplasm. It is a molecular chaperone that binds to a subset of precursor proteins, maintaining them in a translocation-competent state. It also specifically binds to its receptor SecA. The chain is Protein-export protein SecB from Buchnera aphidicola subsp. Acyrthosiphon pisum (strain 5A).